A 62-amino-acid chain; its full sequence is Ribulose bisphosphate carboxylase/oxygenase activase, chloroplastic (62 aa).

This sequence belongs to the RuBisCO activase family.

Its subcellular location is the plastid. The protein resides in the chloroplast stroma. In terms of biological role, activation of RuBisCO (ribulose-1,5-bisphosphate carboxylase/oxygenase; EC 4.1.1.39) involves the ATP-dependent carboxylation of the epsilon-amino group of lysine leading to a carbamate structure. The chain is Ribulose bisphosphate carboxylase/oxygenase activase, chloroplastic from Vitis sp. (Grape).